Consider the following 1369-residue polypeptide: Phospholipase D1 (1369 aa).

2 disordered regions span residues 27-90 (YSEK…SSWH) and 318-340 (ESHS…GRKK). The segment covering 31-53 (GTGRKDAEDHTPSKITDLEKNVD) has biased composition (basic and acidic residues). Residues 208 to 379 (TDLIKVSVLD…NVLYSFLEFS (172 aa)) enclose the PX domain. PLD phosphodiesterase domains are found at residues 641-668 (LFWA…CFGR) and 941-968 (EMIY…NERS). Residues 1277–1289 (HETHEKSENDPKN) show a composition bias toward basic and acidic residues. Residues 1277-1320 (HETHEKSENDPKNPKAGSQGSGNTSASEDSKTEKPKTRTNNGLQ) form a disordered region. Over residues 1292 to 1303 (AGSQGSGNTSAS) the composition is skewed to polar residues.

The protein belongs to the phospholipase D family.

The protein localises to the cytoplasm. The catalysed reaction is a 1,2-diacyl-sn-glycero-3-phosphocholine + H2O = a 1,2-diacyl-sn-glycero-3-phosphate + choline + H(+). With respect to regulation, activity is slightly stimulated by oleate. Required for meiosis and spore formation. Seems to be involved in the coordinate induction of late meiotic events. This chain is Phospholipase D1 (pld1), found in Schizosaccharomyces pombe (strain 972 / ATCC 24843) (Fission yeast).